Here is a 444-residue protein sequence, read N- to C-terminus: Methylenetetrahydrofolate--tRNA-(uracil-5-)-methyltransferase TrmFO (444 aa).

11–16 serves as a coordination point for FAD; the sequence is GGGLAG.

The protein belongs to the MnmG family. TrmFO subfamily. FAD serves as cofactor.

The protein localises to the cytoplasm. It carries out the reaction uridine(54) in tRNA + (6R)-5,10-methylene-5,6,7,8-tetrahydrofolate + NADH + H(+) = 5-methyluridine(54) in tRNA + (6S)-5,6,7,8-tetrahydrofolate + NAD(+). The enzyme catalyses uridine(54) in tRNA + (6R)-5,10-methylene-5,6,7,8-tetrahydrofolate + NADPH + H(+) = 5-methyluridine(54) in tRNA + (6S)-5,6,7,8-tetrahydrofolate + NADP(+). Catalyzes the folate-dependent formation of 5-methyl-uridine at position 54 (M-5-U54) in all tRNAs. This is Methylenetetrahydrofolate--tRNA-(uracil-5-)-methyltransferase TrmFO from Desulfotalea psychrophila (strain LSv54 / DSM 12343).